The chain runs to 901 residues: HTH-type transcriptional regulator MalT (901 aa).

Residue 39–46 (SPAGYGKT) coordinates ATP. Residues 829–894 (ELIRTSPLTQ…DAVQHAQQLL (66 aa)) form the HTH luxR-type domain. Residues 853–872 (NEQIAGELAVAATTIKTHIR) constitute a DNA-binding region (H-T-H motif).

It belongs to the MalT family. In terms of assembly, monomer in solution. Oligomerizes to an active state in the presence of the positive effectors ATP and maltotriose.

Activated by ATP and maltotriose, which are both required for DNA binding. In terms of biological role, positively regulates the transcription of the maltose regulon whose gene products are responsible for uptake and catabolism of malto-oligosaccharides. Specifically binds to the promoter region of its target genes, recognizing a short DNA motif called the MalT box. This is HTH-type transcriptional regulator MalT from Salmonella gallinarum (strain 287/91 / NCTC 13346).